Reading from the N-terminus, the 183-residue chain is Capsid protein (183 aa).

Positions 136 to 183 are disordered; the sequence is NAPILSTLPETTVVRRRGRSPRRRTPSPRRRRSQSPRRRRSQSRESQC. The segment covering 149-176 has biased composition (basic residues); sequence VRRRGRSPRRRTPSPRRRRSQSPRRRRS. Ser155, Ser162, and Ser170 each carry phosphoserine; by host. The 1; half-length repeat unit spans residues 155–161; sequence SPRRRTP. The 3 X 8 AA repeats of S-P-R-R-R-[PR]-S-Q stretch occupies residues 155–177; sequence SPRRRTPSPRRRRSQSPRRRRSQ. The Bipartite nuclear localization signal motif lies at 158-175; sequence RRTPSPRRRRSQSPRRRR. Repeat copies occupy residues 162-169 and 170-177. The interval 177–183 is RNA binding; it reads QSRESQC.

It belongs to the orthohepadnavirus core antigen family. In terms of assembly, homodimerizes, then multimerizes. Interacts with cytosol exposed regions of viral L glycoprotein present in the reticulum-to-Golgi compartment. Interacts with human FLNB. Phosphorylated form interacts with host importin alpha; this interaction depends on the exposure of the NLS, which itself depends upon genome maturation and/or phosphorylation of the capsid protein. Interacts with host NUP153. Phosphorylated by host SRPK1, SRPK2, and maybe protein kinase C or GAPDH. Phosphorylation is critical for pregenomic RNA packaging. Protein kinase C phosphorylation is stimulated by HBx protein and may play a role in transport of the viral genome to the nucleus at the late step during the viral replication cycle.

It localises to the virion. Its subcellular location is the host cytoplasm. Its function is as follows. Self assembles to form an icosahedral capsid. Most capsids appear to be large particles with an icosahedral symmetry of T=4 and consist of 240 copies of capsid protein, though a fraction forms smaller T=3 particles consisting of 180 capsid proteins. Entering capsids are transported along microtubules to the nucleus. Phosphorylation of the capsid is thought to induce exposure of nuclear localization signal in the C-terminal portion of the capsid protein that allows binding to the nuclear pore complex via the importin (karyopherin-) alpha and beta. Capsids are imported in intact form through the nuclear pore into the nuclear basket, where it probably binds NUP153. Only capsids that contain the mature viral genome can release the viral DNA and capsid protein into the nucleoplasm. Immature capsids get stuck in the basket. Capsids encapsulate the pre-genomic RNA and the P protein. Pre-genomic RNA is reverse-transcribed into DNA while the capsid is still in the cytoplasm. The capsid can then either be directed to the nucleus, providing more genomes for transcription, or bud through the endoplasmic reticulum to provide new virions. The protein is Capsid protein of Hepatitis B virus genotype B2 (isolate Indonesia/pIDW420/1988) (HBV-B).